The sequence spans 1701 residues: MKIIFFLCSFLFFIINTQCVTHESYQELVKKLEALEDAVLTGYSLFQKEKMVLNEGTSGTAVTTSTPGSSGSVTSGGSVASVASVASGGSGGSVASGGSGNSRRTNPSDNSSDSNTKTYADLKHRVQNYLFTIKELKYPELFDLTNHMLTLSKNVDGFKYLIDGYEEINELLYKLNFYYDLLRAKLNDACANSYCQIPFNLKIRANELDVLKKIVFGYRKPLDNIKDNVGKMEDYIKKNKTTIANINELIEGSKKTIDQNKNADNEEGKKKLYQAQYNLFIYNKQLQEAHNLISVLEKRIDTLKKNENIKKLLEDIDKIKTDAENPTTGSKPNPLPENKKKEVEGHEEKIKEIAKTIKFNIDSLFTDPLELEYYLREKNKKVDVTPKSQDPTKSVQIPKVPYPNGIVYPLPLTDIHNSLAADNDKNSYGDLMNPDTKEKINEKIITDNKERKIFINNIKKQIDLEEKNINHTKEQNKKLLEDYEKSKKDYEELLEKFYEMKFNNNFDKDVVDKIFSARYTYNVEKQRYNNKFSSSNNSVYNVQKLKKALSYLEDYSLRKGISEKDFNHYYTLKTGLEADIKKLTEEIKSSENKILEKNFKGLTHSANASLEVSDIVKLQVQKVLLIKKIEDLRKIELFLKNAQLKDSIHVPNIYKPQNKPEPYYLIVLKKEVDKLKEFIPKVKDMLKKEQAVLSSITQPLVAASETTEDGGHSTHTLSQSGETEVTEETEVTEETVGHTTTVTITLPPKEESAPKEVKVVENSIEHKSNDNSQALTKTVYLKKLDEFLTKSYICHKYILVSNSSMDQKLLEVYNLTPEEENELKSCDPLDLLFNIQNNIPAMYSLYDSMNIDLQHLFFELYQKEMIYYLHKLKEENHIKKLLEEQKQITGTSSTSSPGNTTVNTAQSATHSNSQNQQSNASSTNTQNGVAVSSGPAVVEESHDPLTVLSISNDLKGIVSLLNLGNKTKVPNPLTISTTEMEKFYENILKNNDTYFNDDIKQFVKSNSKVITGLTETQKNALNDEIKKLKDTLQLSFDLYNKYKLKLDRLFNKKKELGQDKMQIKKLTLLKEQLESKLNSLNNPHNVLQNFSVFFNKKKEAEIAETENTLENTKILLKHYKGLVKYYNGESSPLKTLSEVSIQTEDNYANLEKFRALSKIDGKLNDNLHLGKKKLSFLSSGLHHLITELKEVIKNKNYTGNSPSENNKKVNEALKSYENFLPEAKVTTVVTPPQPDVTPSPLSVRVSGSSGSTKEETQIPTSGSLLTELQQVVQLQNYDEEDDSLVVLPIFGESEDNDEYLDQVVTGEAISVTMDNILSGFENEYDVIYLKPLAGVYRSLKKQIEKNIITFNLNLNDILNSRLKKRKYFLDVLESDLMQFKHISSNEYIIEDSFKLLNSEQKNTLLKSYKYIKESVENDIKFAQEGISYYEKVLAKYKDDLESIKKVIKEEKEKFPSSPPTTPPSPAKTDEQKKESKFLPFLTNIETLYNNLVNKIDDYLINLKAKINDCNVEKDEAHVKITKLSDLKAIDDKIDLFKNTNDFEAIKKLINDDTKKDMLGKLLSTGLVQNFPNTIISKLIEGKFQDMLNISQHQCVKKQCPENSGCFRHLDEREECKCLLNYKQEGDKCVENPNPTCNENNGGCDADATCTEEDSGSSRKKITCECTKPDSYPLFDGIFCSSSNFLGISFLLILMLILYSFI.

The first 19 residues, 1–19, serve as a signal peptide directing secretion; it reads MKIIFFLCSFLFFIINTQC. The segment covering 89–100 has biased composition (gly residues); it reads GSGGSVASGGSG. The disordered stretch occupies residues 89 to 118; the sequence is GSGGSVASGGSGNSRRTNPSDNSSDSNTKT. Low complexity predominate over residues 101-116; it reads NSRRTNPSDNSSDSNT. N-linked (GlcNAc...) asparagine glycosylation is found at N110 and N239. The segment at 322 to 344 is disordered; sequence DAENPTTGSKPNPLPENKKKEVE. N470, N536, and N607 each carry an N-linked (GlcNAc...) asparagine glycan. The tract at residues 704–739 is disordered; sequence SETTEDGGHSTHTLSQSGETEVTEETEVTEETVGHT. The segment covering 724–733 has biased composition (acidic residues); the sequence is EVTEETEVTE. N802, N899, N919, N965, N991, N1089, and N1196 each carry an N-linked (GlcNAc...) asparagine glycan. Residues 889 to 927 are compositionally biased toward low complexity; it reads TGTSSTSSPGNTTVNTAQSATHSNSQNQQSNASSTNTQN. A disordered region spans residues 889–936; it reads TGTSSTSSPGNTTVNTAQSATHSNSQNQQSNASSTNTQNGVAVSSGPA. Disordered regions lie at residues 1231-1259 and 1451-1472; these read PPQP…TQIP and KEKF…DEQK. Residues 1245–1259 are compositionally biased toward polar residues; it reads VSGSSGSTKEETQIP. Pro residues predominate over residues 1456 to 1465; it reads SSPPTTPPSP. N-linked (GlcNAc...) asparagine glycosylation occurs at N1588. 2 EGF-like domains span residues 1592-1632 and 1633-1680; these read HQCV…VENP and NPTC…IFCS. Intrachain disulfides connect C1594/C1605, C1599/C1615, C1617/C1628, C1636/C1649, C1643/C1663, and C1665/C1679. S1680 carries GPI-anchor amidated serine lipidation. The propeptide at 1681–1701 is removed in mature form; sequence SSNFLGISFLLILMLILYSFI.

Forms a complex composed of subunits p83, p30, p38, and p42 which remain non-covalently associated; the complex is formed at the merozoite surface prior to egress from host erythrocytes. Forms a complex composed of processed MSP1 subunits, MSP6 subunit p36 and MSP7; the complex is formed at the merozoite surface prior to egress from host erythrocytes. Within the complex, interacts (via subunit p38) with MSP6 subunit p36 and (via subunits p83, p30 and p38) with MSP7 (via subunit p22). Forms a complex composed of MSP1, MSP6, DBLMSP1 and DBLMSP2. Within the complex, interacts (via subunit p38) with DBLMSP1 and DBLMSP2. Forms a complex composed of MSP1, and rhoptry proteins RhopH3, RAP1 and CLAG9/RhopH3. Within the complex, interacts (via subunits p42 and p19) with RhopH3 (via C-terminus). Forms a complex composed of MSP1, MSP6, MSP7, MSP9 and MSP3; within the complex, MSP6 and MSP9 mediate the binding to the host erythrocyte. Interacts (via subunits p19 and p42) with MSP9; the interaction is direct; MSP1 subunits p19 or p42, and MSP9 form a co-ligand complex that interacts with host SLC4A1/Band 3 protein. May interact with PFD6. Interacts with host spectrin. As to quaternary structure, interacts with host glycophorin GYPA in a sialic acid-independent manner. In terms of assembly, interacts with host proinflammatory cytokine S100P; the interaction blocks S100P inflammatory and chemotactic activities. Interacts with host SLC4A1/Band 3 (via 5ABC region) on the host erythrocyte surface in a sialic acid-independent manner. The p190 precursor is cleaved by SUB1 prior to merozoite egress into 4 subunits p83, p30, p38, and p42 which remain non-covalently associated. SUB1-mediated proteolytic cleavage occurs in an orderly manner; the first cleavage occurs at the p30/p38 site, followed by cleavage at the p83/p30 site, in the 3D7 strain a second cleavage occurs at the N-terminus of p83, the last cleavage occurs at the p38/p42 site. The order of cleavage is essential for parasite viability. SUB1-mediated processing is essential for merozoite egress. In a second processing step during erythrocyte invasion, p42 is cleaved by SUB2 into p33 and p19; the latter remains attached to the merozoite surface via its GPI-anchor and is endocytosed during the subsequent ring stage.

The protein resides in the cell membrane. The protein localises to the secreted. It is found in the vacuole membrane. Functionally, during the asexual blood stage, involved in merozoite egress from host erythrocytes possibly via its interaction with the host cytoskeleton protein spectrin resulting in the destabilization of the host cytoskeleton and thus leading to erythrocyte cell membrane rupture. Involved in the binding to host erythrocytes and is required for host erythrocyte invasion. By binding to host proinflammatory cytokine S100P may interfere with host immune responses. Its function is as follows. Involved in merozoite invasion of host erythrocytes. May play a role in the biogenesis and/or function of the food vacuole during the intraerythrocytic development. This chain is Merozoite surface protein 1, found in Plasmodium falciparum (isolate FC27 / Papua New Guinea).